The chain runs to 406 residues: Probable endo-xylogalacturonan hydrolase A (406 aa).

A signal peptide spans Met1–Ala18. Positions Pro20–Asp49 are disordered. PbH1 repeat units lie at residues Thr183–Ala213, Ser214–Pro235, Ala237–Ser257, Val266–Pro289, Val299–Ser320, and Thr368–Gly390. Asp228 acts as the Proton donor in catalysis. Residue Asn244 is glycosylated (N-linked (GlcNAc...) asparagine). The active site involves His251. 3 N-linked (GlcNAc...) asparagine glycosylation sites follow: Asn273, Asn278, and Asn301.

It belongs to the glycosyl hydrolase 28 family.

It localises to the secreted. Its function is as follows. Pectinolytic enzyme involved in the degradation of xylogalacturonan (xga), a galacturonan backbone heavily substituted with xylose, and which is one important component of the hairy regions of pectin. Activity requires a galacturonic acid backbone substituted with xylose. In Aspergillus oryzae (strain ATCC 42149 / RIB 40) (Yellow koji mold), this protein is Probable endo-xylogalacturonan hydrolase A (xghA).